Reading from the N-terminus, the 232-residue chain is Phosphatidylserine decarboxylase proenzyme (232 aa).

Catalysis depends on Ser190, which acts as the Schiff-base intermediate with substrate; via pyruvic acid. Ser190 is modified (pyruvic acid (Ser); by autocatalysis).

This sequence belongs to the phosphatidylserine decarboxylase family. PSD-A subfamily. As to quaternary structure, heterodimer of a large membrane-associated beta subunit and a small pyruvoyl-containing alpha subunit. Pyruvate is required as a cofactor. Post-translationally, is synthesized initially as an inactive proenzyme. Formation of the active enzyme involves a self-maturation process in which the active site pyruvoyl group is generated from an internal serine residue via an autocatalytic post-translational modification. Two non-identical subunits are generated from the proenzyme in this reaction, and the pyruvate is formed at the N-terminus of the alpha chain, which is derived from the carboxyl end of the proenzyme. The post-translation cleavage follows an unusual pathway, termed non-hydrolytic serinolysis, in which the side chain hydroxyl group of the serine supplies its oxygen atom to form the C-terminus of the beta chain, while the remainder of the serine residue undergoes an oxidative deamination to produce ammonia and the pyruvoyl prosthetic group on the alpha chain.

It localises to the cell membrane. The catalysed reaction is a 1,2-diacyl-sn-glycero-3-phospho-L-serine + H(+) = a 1,2-diacyl-sn-glycero-3-phosphoethanolamine + CO2. Its pathway is phospholipid metabolism; phosphatidylethanolamine biosynthesis; phosphatidylethanolamine from CDP-diacylglycerol: step 2/2. Functionally, catalyzes the formation of phosphatidylethanolamine (PtdEtn) from phosphatidylserine (PtdSer). This is Phosphatidylserine decarboxylase proenzyme from Rhodopseudomonas palustris (strain TIE-1).